We begin with the raw amino-acid sequence, 389 residues long: uncharacterized protein (389 aa).

An N-terminal signal peptide occupies residues M1 to A23.

This sequence belongs to the IUNH family.

The protein resides in the endoplasmic reticulum lumen. This is an uncharacterized protein from Schizosaccharomyces pombe (strain 972 / ATCC 24843) (Fission yeast).